A 463-amino-acid chain; its full sequence is ATP-dependent protease ATPase subunit HslU (463 aa).

Residues Ile19 and 61-66 each bind ATP; that span reads GVGKTE. The tract at residues 154–175 is disordered; the sequence is FGGNQNSNQTSDAQEDDEIEKK. Positions 156-165 are enriched in polar residues; sequence GNQNSNQTSD. ATP contacts are provided by Asp277, Glu341, and Arg413.

This sequence belongs to the ClpX chaperone family. HslU subfamily. In terms of assembly, a double ring-shaped homohexamer of HslV is capped on each side by a ring-shaped HslU homohexamer. The assembly of the HslU/HslV complex is dependent on binding of ATP.

The protein localises to the cytoplasm. Its function is as follows. ATPase subunit of a proteasome-like degradation complex; this subunit has chaperone activity. The binding of ATP and its subsequent hydrolysis by HslU are essential for unfolding of protein substrates subsequently hydrolyzed by HslV. HslU recognizes the N-terminal part of its protein substrates and unfolds these before they are guided to HslV for hydrolysis. The polypeptide is ATP-dependent protease ATPase subunit HslU (Bacillus mycoides (strain KBAB4) (Bacillus weihenstephanensis)).